The chain runs to 2197 residues: Activating signal cointegrator 1 complex subunit 3 (2197 aa).

At serine 12 the chain carries Phosphoserine. Coiled coils occupy residues 18-80 (KQDN…AKQI) and 328-356 (IQSE…KAGE). The region spanning 487–670 (DTAYNTNENM…FLHVNPYIGL (184 aa)) is the Helicase ATP-binding 1 domain. Residue 500–507 (APTGAGKT) participates in ATP binding. Lysine 573 is modified (N6-acetyllysine). Residues 612-615 (DEVH) carry the DEVH box motif. One can recognise a Helicase C-terminal 1 domain in the interval 697 to 915 (QLNNMDEVCY…GTVTNVEEAV (219 aa)). Residues 979 to 1288 (STDLGRTASH…GAEAVCIINF (310 aa)) form the SEC63 1 domain. A Helicase ATP-binding 2 domain is found at 1337–1512 (HTLYHTDCNV…WLNIKQMGLF (176 aa)). 1350–1357 (APTGSGKT) contacts ATP. The DEIH box motif lies at 1454–1457 (DEIH). One can recognise a Helicase C-terminal 2 domain in the interval 1565-1739 (RMLSSMTKLE…VLSDHLNAEI (175 aa)). The SEC63 2 domain maps to 1812 to 2175 (PLTCGRIASY…YLGLDQQYDI (364 aa)).

This sequence belongs to the helicase family. In terms of assembly, identified in the ASCC complex that contains ASCC1, ASCC2 and ASCC3. Functions as a scaffolding subunit that interacts directly with both ASCC1 and ASCC2. Interacts directly with ALKBH3, and thereby recruits ALKBH3 to the ASCC complex. Part of the ASC-1/TRIP4 complex, that contains TRIP4, ASCC1, ASCC2 and ASCC3. Part of the RQT (ribosome quality control trigger) complex, that contains ASCC2, ASCC3 and TRIP4. Associates with ribosomes; recruited to collided ribosomes. Interacts with ZCCHC4. Interacts with ZNF598. Interacts with RPS3.

The protein localises to the nucleus. The protein resides in the nucleus speckle. Its subcellular location is the cytoplasm. It localises to the cytosol. It carries out the reaction Couples ATP hydrolysis with the unwinding of duplex DNA by translocating in the 3'-5' direction.. The enzyme catalyses ATP + H2O = ADP + phosphate + H(+). Its function is as follows. ATPase involved both in DNA repair and rescue of stalled ribosomes. 3'-5' DNA helicase involved in repair of alkylated DNA: promotes DNA unwinding to generate single-stranded substrate needed for ALKBH3, enabling ALKBH3 to process alkylated N3-methylcytosine (3mC) within double-stranded regions. Also involved in activation of the ribosome quality control (RQC) pathway, a pathway that degrades nascent peptide chains during problematic translation. Drives the splitting of stalled ribosomes that are ubiquitinated in a ZNF598-dependent manner, as part of the ribosome quality control trigger (RQT) complex. Part of the ASC-1 complex that enhances NF-kappa-B, SRF and AP1 transactivation. The protein is Activating signal cointegrator 1 complex subunit 3 (Ascc3) of Rattus norvegicus (Rat).